Reading from the N-terminus, the 443-residue chain is ASTRA-associated protein 1 (443 aa).

4 WD repeats span residues 23–67 (YHKR…PITH), 71–110 (EGNS…QLSI), 258–295 (HYPN…QLET), and 318–359 (KVHL…VEQT). The interval 372–391 (SSMGDLTNGSGSNTESSSKS) is disordered. Over residues 378–391 (TNGSGSNTESSSKS) the composition is skewed to low complexity.

It belongs to the WD repeat ASA1 family. Component of the ASTRA chromatin remodeling machinery complex composed of at least RVB1, RVB2, TRA1, TEL2, TTI1 and TTI2.

The protein localises to the nucleus. Component of the ASTRA complex involved in chromatin remodeling. This chain is ASTRA-associated protein 1 (ASA1), found in Saccharomyces cerevisiae (strain RM11-1a) (Baker's yeast).